A 275-amino-acid chain; its full sequence is Non-heme chloroperoxidase CPO-A1 (275 aa).

In terms of domain architecture, AB hydrolase-1 spans 22 to 255; sequence PVVFIHGWPL…KVYEGSSHGI (234 aa). Catalysis depends on charge relay system residues S95, D224, and H253.

This sequence belongs to the AB hydrolase superfamily. Bacterial non-heme haloperoxidase / perhydrolase family. In terms of assembly, homodimer.

With respect to regulation, brominating activity not inhibited by azide, peroxidase activity stimulated by bromide. In terms of biological role, may be a chlorinating enzyme involved in 7-chlorotetracycline biosynthesis. Able to brominate as well. The chain is Non-heme chloroperoxidase CPO-A1 (bpoA1) from Kitasatospora aureofaciens (Streptomyces aureofaciens).